A 32-amino-acid chain; its full sequence is Peptide tarsal-less AA (32 aa).

The interval 1–32 (MLDPTGTYRRPRDTQDSRQKRRQDCLDPTGQY) is disordered. Repeat 1 spans residues 2 to 8 (LDPTGTY). Positions 2–32 (LDPTGTYRRPRDTQDSRQKRRQDCLDPTGQY) are 2 X 7 AA repeats of L-D-P-T-G-[TQ]-Y. A compositionally biased stretch (basic and acidic residues) spans 10–25 (RPRDTQDSRQKRRQDC). Repeat unit 2 spans residues 26-32 (LDPTGQY).

It localises to the cytoplasm. It is found in the nucleus. Its function is as follows. One of four peptides (tal-1A, tal-2A, tal-3A and tal-AA) produced from a polycistronic gene that function redundantly in several developmental processes. Required in early stages of leg development for the intercalation of the tarsal segments during the mid-third instar stage and later for tarsal joint formation. Promotes the post-translational modification of ovo isoform B (svb) into its active form which in turn initiates trichome development and promotes tarsal joint development. This is likely due to recruitment of the E3 ubiquitin-protein ligase Ubr3 to svb for ubiquitination of its N-terminus, converting svb into a transcriptional activator. Also enhances interaction of Ubr3 with Diap1. Required for correct wing and leg formation through its regulation of several genes including those in the Notch signaling pathway. Essential for denticle formation and may have a role in the developmental timing of trichome differentiation. Essential for the development of taenidial folds in the trachea. In Drosophila melanogaster (Fruit fly), this protein is Peptide tarsal-less AA.